The sequence spans 190 residues: dTTP/UTP pyrophosphatase (190 aa).

The Proton acceptor role is filled by aspartate 71.

The protein belongs to the Maf family. YhdE subfamily. The cofactor is a divalent metal cation.

It localises to the cytoplasm. The catalysed reaction is dTTP + H2O = dTMP + diphosphate + H(+). The enzyme catalyses UTP + H2O = UMP + diphosphate + H(+). In terms of biological role, nucleoside triphosphate pyrophosphatase that hydrolyzes dTTP and UTP. May have a dual role in cell division arrest and in preventing the incorporation of modified nucleotides into cellular nucleic acids. The polypeptide is dTTP/UTP pyrophosphatase (Xanthomonas euvesicatoria pv. vesicatoria (strain 85-10) (Xanthomonas campestris pv. vesicatoria)).